A 272-amino-acid polypeptide reads, in one-letter code: Putative phosphoenolpyruvate synthase regulatory protein (272 aa).

An ADP-binding site is contributed by glycine 152–threonine 159.

It belongs to the pyruvate, phosphate/water dikinase regulatory protein family. PSRP subfamily.

It carries out the reaction [pyruvate, water dikinase] + ADP = [pyruvate, water dikinase]-phosphate + AMP + H(+). It catalyses the reaction [pyruvate, water dikinase]-phosphate + phosphate + H(+) = [pyruvate, water dikinase] + diphosphate. Its function is as follows. Bifunctional serine/threonine kinase and phosphorylase involved in the regulation of the phosphoenolpyruvate synthase (PEPS) by catalyzing its phosphorylation/dephosphorylation. In Pseudomonas putida (strain ATCC 47054 / DSM 6125 / CFBP 8728 / NCIMB 11950 / KT2440), this protein is Putative phosphoenolpyruvate synthase regulatory protein.